The chain runs to 355 residues: Homoserine O-succinyltransferase (355 aa).

The active-site Acyl-thioester intermediate is the Cys-146. Substrate-binding residues include Lys-167 and Ser-196. The Proton acceptor role is filled by His-239. Residue Glu-241 is part of the active site. Residue Arg-253 participates in substrate binding.

The protein belongs to the MetA family.

It localises to the cytoplasm. The enzyme catalyses L-homoserine + succinyl-CoA = O-succinyl-L-homoserine + CoA. The protein operates within amino-acid biosynthesis; L-methionine biosynthesis via de novo pathway; O-succinyl-L-homoserine from L-homoserine: step 1/1. In terms of biological role, transfers a succinyl group from succinyl-CoA to L-homoserine, forming succinyl-L-homoserine. The polypeptide is Homoserine O-succinyltransferase (Methylococcus capsulatus (strain ATCC 33009 / NCIMB 11132 / Bath)).